The following is a 520-amino-acid chain: Ribonuclease Y (520 aa).

The helical transmembrane segment at 1 to 21 (MEILIIVIAAVVGLALGFAIA) threads the bilayer. Positions 210–295 (CVSVFNLESD…EVVKKTRKQI (86 aa)) constitute a KH domain. An HD domain is found at 336-429 (LLQHSREVAK…VQVCDAISGA (94 aa)).

The protein belongs to the RNase Y family.

The protein localises to the cell membrane. Functionally, endoribonuclease that initiates mRNA decay. In Christiangramia forsetii (strain DSM 17595 / CGMCC 1.15422 / KT0803) (Gramella forsetii), this protein is Ribonuclease Y.